A 174-amino-acid polypeptide reads, in one-letter code: Large ribosomal subunit protein uL10 (174 aa).

This sequence belongs to the universal ribosomal protein uL10 family. In terms of assembly, part of the ribosomal stalk of the 50S ribosomal subunit. The N-terminus interacts with L11 and the large rRNA to form the base of the stalk. The C-terminus forms an elongated spine to which L12 dimers bind in a sequential fashion forming a multimeric L10(L12)X complex.

In terms of biological role, forms part of the ribosomal stalk, playing a central role in the interaction of the ribosome with GTP-bound translation factors. This Pelobacter propionicus (strain DSM 2379 / NBRC 103807 / OttBd1) protein is Large ribosomal subunit protein uL10.